The sequence spans 559 residues: Estrogen receptor beta (559 aa).

The tract at residues 1–155 is modulating; sequence MAVACSPEKD…SSGGKADLHF (155 aa). Residues 128–148 form a disordered region; the sequence is TSSKSARRRSQENEEGEVSSG. 2 NR C4-type zinc fingers span residues 156–176 and 192–216; these read CAVCHDYASGYHYGVWSCEGC and CPATNQCTIDKNRRKSCQACRLHKC. The segment at residues 156-221 is a DNA-binding region (nuclear receptor); it reads CAVCHDYASG…RLHKCYNVGM (66 aa). Positions 243–254 are enriched in polar residues; that stretch reads RLSSQGRTSGPS. Residues 243-269 form a disordered region; it reads RLSSQGRTSGPSVLNGPAVGPLNTPQP. The 237-residue stretch at 273-509 folds into the NR LBD domain; that stretch reads TSKQLIERIM…DLLLEMLDAH (237 aa). The segment at 514 to 559 is disordered; the sequence is SRLPRRSPQQETVEQCDAPARPHSPGTSGPTNTWTPSCTGGRGEPQ. Positions 538-551 are enriched in polar residues; the sequence is PGTSGPTNTWTPSC.

Belongs to the nuclear hormone receptor family. NR3 subfamily. Binds DNA as a homodimer. Can form a heterodimer with ER-alpha.

It is found in the nucleus. Binds estrogens with an affinity similar to that of ER-alpha, and activates expression of reporter genes containing estrogen response elements (ERE) in an estrogen-dependent manner. This chain is Estrogen receptor beta (esr2), found in Sparus aurata (Gilthead sea bream).